A 278-amino-acid polypeptide reads, in one-letter code: Putative phosphatase MG265 (278 aa).

The active-site Nucleophile is D9. D9 is a binding site for Mg(2+). A phosphate-binding site is contributed by L10. D11 serves as a coordination point for Mg(2+). Phosphate contacts are provided by residues 43–44 and K204; that span reads SG. Position 227 (D227) interacts with Mg(2+). Residue N230 participates in phosphate binding.

This sequence belongs to the HAD-like hydrolase superfamily. Cof family. The cofactor is Mg(2+).

The protein is Putative phosphatase MG265 of Mycoplasma genitalium (strain ATCC 33530 / DSM 19775 / NCTC 10195 / G37) (Mycoplasmoides genitalium).